Here is a 649-residue protein sequence, read N- to C-terminus: Epithelial sodium channel subunit gamma (649 aa).

The Cytoplasmic portion of the chain corresponds to 1-55 (MAPGEKIKAKIKKNLPVTGPQAPTIKELMRWYCLNTNTHGCRRIVVSRGRLRRLL). A helical transmembrane segment spans residues 56–76 (WIGFTLTAVALILWQCALLVF). Topologically, residues 77 to 541 (SFYTVSVSIK…GGQLGLWMSC (465 aa)) are extracellular. 8 disulfide bridges follow: C100-C283, C207-C214, C260-C267, C372-C457, C394-C453, C398-C449, C407-C434, and C409-C423. Positions 135–221 (RKRREAESWN…SDCATYTFSS (87 aa)) are gating release of inhibition by proteolysis (GRIP); protease-sensitive region that is responsible for the proteolytic activation of the channel. An N-linked (GlcNAc...) asparagine glycan is attached at N209. An N-linked (GlcNAc...) asparagine glycan is attached at N497. Residues 542–562 (SVVCVIEIIEVFFIDFFSIIA) traverse the membrane as a helical segment. The Cytoplasmic portion of the chain corresponds to 563-649 (RRQWQKAKEW…LTDTQMLDEL (87 aa)). The short motif at 623–627 (PPPKY) is the PY motif; recruits WW domain-containing proteins and is thereby required for ubiquitination and inhibition of the channel by NEDD4 and NEDD4L element.

Belongs to the amiloride-sensitive sodium channel (TC 1.A.6) family. SCNN1G subfamily. Component of the heterotrimeric epithelial sodium channel (ENaC) composed of an alpha/SCNN1A, a beta/SCNN1B and a gamma/SCNN1G subunit. An additional delta/SCNN1D subunit can replace the alpha/SCNN1A subunit to form an alternative channel with specific properties. Interacts with WWP1 (via WW domains). Interacts with WWP2 (via WW domains); inhibits the channel. Interacts with the full-length immature form of PCSK9 (pro-PCSK9); inhibits ENaC by promoting its proteasomal degradation. Interacts with BPIFA1; the interaction is indirect via SCNN1B and inhibits the proteolytic maturation of SCNN1A and SCNN1G and the activation of ENaC. In terms of processing, phosphorylated on serine and threonine residues. Aldosterone and insulin increase the basal level of phosphorylation. Post-translationally, ubiquitinated. Can be ubiquitinated at multiple sites and undergo monoubiquitination and polyubiquitination. Ubiquitination by NEDD4 or NEDD4L inhibits the ENaC channel through endocytosis, intracellular retention and degradation of its individual subunits. ENaC is activated through the proteolytic maturation of its subunits. Furin cleaves the SCNN1G subunit first, followed by cleavage by prostasin (PRSS8), which results in a stepwise increase in the open probability of the channel due to the release of an inhibitory tract. BPIFA1, which is recruited by the SCNN1B subunit, prevents the proteolytic activation of ENaC. In terms of processing, N-glycosylated. N-linked glycans are processed to complex type during ENaC complex assembly and transport to the plasma membrane. As to expression, expressed in kidney (at protein level).

It is found in the apical cell membrane. It carries out the reaction Na(+)(in) = Na(+)(out). With respect to regulation, originally identified and characterized by its inhibition by the diuretic drug amiloride. In terms of biological role, this is one of the three pore-forming subunits of the heterotrimeric epithelial sodium channel (ENaC), a critical regulator of sodium balance and fluid homeostasis. ENaC operates in epithelial tissues, where it mediates the electrodiffusion of sodium ions from extracellular fluid through the apical membrane of cells, with water following osmotically. It plays a key role in maintaining sodium homeostasis through electrogenic sodium reabsorption in the kidneys. Additionally, ENaC is essential for airway surface liquid homeostasis, which is crucial for proper mucus clearance. In Homo sapiens (Human), this protein is Epithelial sodium channel subunit gamma.